Here is a 1233-residue protein sequence, read N- to C-terminus: Rho guanine nucleotide exchange factor 10-like protein (1233 aa).

The segment covering 1 to 10 (MASSNPPPQP) has biased composition (pro residues). The interval 1-93 (MASSNPPPQP…GTGVPAWVSN (93 aa)) is disordered. The segment covering 26-46 (EAEDDPGEAFEFDDSDDEEDT) has biased composition (acidic residues). A Phosphoserine modification is found at Ser40. Positions 72-89 (PVTDPDPAAAPPGTGVPA) are enriched in low complexity. Phosphotyrosine is present on residues Tyr131 and Tyr152. The interval 159–193 (GAPRQAEDLGWSSSEFESYSEDSGEEAKPEVEPAK) is disordered. Positions 183 to 193 (EEAKPEVEPAK) are enriched in basic and acidic residues. Phosphoserine is present on Ser240. The DH domain maps to 275-462 (VRRHILGSIV…ETLAEKLNEQ (188 aa)). Positions 1089–1104 (QEEAEGPRAEEEKPDG) are enriched in basic and acidic residues. Disordered stretches follow at residues 1089-1117 (QEEAEGPRAEEEKPDGQAHQPMPDSHVGR) and 1140-1161 (PLLSMREPAPADGAALEHSEED).

In terms of assembly, interacts with RHOA, RHOB and RHOC.

The protein localises to the cytoplasm. Acts as a guanine nucleotide exchange factor (GEF) for RHOA, RHOB and RHOC. This chain is Rho guanine nucleotide exchange factor 10-like protein (ARHGEF10L), found in Pongo abelii (Sumatran orangutan).